We begin with the raw amino-acid sequence, 160 residues long: MTKEVIVESFELDHTIVKAPYVRLISEEFGPKGDVITNFDVRLVQPNQNSIETAGLHTIEHLLAKLIRQRIDGMIDCSPFGCRTGFHLIMWGEHSSTEIAKVIKSSLEEIADGISWEDVPGTTIESCGNYKDHSLFAAKEWAKLILSQGISDQAFERHLV.

3 residues coordinate Fe cation: His-57, His-61, and Cys-127.

The protein belongs to the LuxS family. As to quaternary structure, homodimer. Requires Fe cation as cofactor.

It carries out the reaction S-(5-deoxy-D-ribos-5-yl)-L-homocysteine = (S)-4,5-dihydroxypentane-2,3-dione + L-homocysteine. In terms of biological role, involved in the synthesis of autoinducer 2 (AI-2) which is secreted by bacteria and is used to communicate both the cell density and the metabolic potential of the environment. The regulation of gene expression in response to changes in cell density is called quorum sensing. Catalyzes the transformation of S-ribosylhomocysteine (RHC) to homocysteine (HC) and 4,5-dihydroxy-2,3-pentadione (DPD). This is S-ribosylhomocysteine lyase from Streptococcus uberis (strain ATCC BAA-854 / 0140J).